We begin with the raw amino-acid sequence, 573 residues long: Ribosomal RNA-processing protein 9 (573 aa).

The segment at M1 to R63 is disordered. S2 carries the N-acetylserine modification. The segment covering D25–N58 has biased composition (acidic residues). A coiled-coil region spans residues S32–N106. The residue at position 50 (S50) is a Phosphoserine. WD repeat units follow at residues G234 to V273, D278 to I317, G320 to F359, F397 to T435, Q471 to E509, and G516 to G562.

It belongs to the WD repeat RRP9 family. As to quaternary structure, interacts with UTP25. Component of the ribosomal small subunit (SSU) processome composed of at least 40 protein subunits and snoRNA U3.

It localises to the nucleus. The protein resides in the nucleolus. Its function is as follows. Involved in nucleolar processing of pre-18S ribosomal RNA. Required for efficient pre-rRNA cleavage at sites A0, A1 and A2, and biosynthesis of 18S rRNA. The chain is Ribosomal RNA-processing protein 9 (RRP9) from Saccharomyces cerevisiae (strain ATCC 204508 / S288c) (Baker's yeast).